A 376-amino-acid chain; its full sequence is Chaperone protein DnaJ (376 aa).

A J domain is found at 5–69 (DYYEVLGVSK…QKRAQYDQYG (65 aa)). The segment at 133 to 215 (GKDAEIEIPR…CHGKGRVTKT (83 aa)) adopts a CR-type zinc-finger fold. 8 residues coordinate Zn(2+): C146, C149, C163, C166, C189, C192, C203, and C206. 4 CXXCXGXG motif repeats span residues 146 to 153 (CDTCHGSG), 163 to 170 (CSHCGGKG), 189 to 196 (CQYCNGTG), and 203 to 210 (CPTCHGKG).

The protein belongs to the DnaJ family. In terms of assembly, homodimer. Zn(2+) serves as cofactor.

The protein resides in the cytoplasm. In terms of biological role, participates actively in the response to hyperosmotic and heat shock by preventing the aggregation of stress-denatured proteins and by disaggregating proteins, also in an autonomous, DnaK-independent fashion. Unfolded proteins bind initially to DnaJ; upon interaction with the DnaJ-bound protein, DnaK hydrolyzes its bound ATP, resulting in the formation of a stable complex. GrpE releases ADP from DnaK; ATP binding to DnaK triggers the release of the substrate protein, thus completing the reaction cycle. Several rounds of ATP-dependent interactions between DnaJ, DnaK and GrpE are required for fully efficient folding. Also involved, together with DnaK and GrpE, in the DNA replication of plasmids through activation of initiation proteins. In Listeria monocytogenes serotype 4b (strain CLIP80459), this protein is Chaperone protein DnaJ.